The chain runs to 413 residues: Tyrosine--tRNA ligase (413 aa).

Tyr34 lines the L-tyrosine pocket. The short motif at 39–48 is the 'HIGH' region element; the sequence is PTSHSLTVGH. L-tyrosine-binding residues include Tyr164 and Gln168. Positions 225–229 match the 'KMSKS' region motif; it reads KFGKS. Lys228 is an ATP binding site. Residues 347–413 form the S4 RNA-binding domain; sequence ILLVDALVQT…GKKNNALIVF (67 aa).

The protein belongs to the class-I aminoacyl-tRNA synthetase family. TyrS type 1 subfamily. Homodimer.

The protein localises to the cytoplasm. It carries out the reaction tRNA(Tyr) + L-tyrosine + ATP = L-tyrosyl-tRNA(Tyr) + AMP + diphosphate + H(+). Its function is as follows. Catalyzes the attachment of tyrosine to tRNA(Tyr) in a two-step reaction: tyrosine is first activated by ATP to form Tyr-AMP and then transferred to the acceptor end of tRNA(Tyr). This Onion yellows phytoplasma (strain OY-M) protein is Tyrosine--tRNA ligase.